Here is a 177-residue protein sequence, read N- to C-terminus: Ribosome maturation factor RimP (177 aa).

This sequence belongs to the RimP family.

The protein resides in the cytoplasm. Its function is as follows. Required for maturation of 30S ribosomal subunits. The polypeptide is Ribosome maturation factor RimP (Mycobacterium marinum (strain ATCC BAA-535 / M)).